The sequence spans 82 residues: Small ribosomal subunit protein bS16 (82 aa).

It belongs to the bacterial ribosomal protein bS16 family.

The protein is Small ribosomal subunit protein bS16 of Microcystis aeruginosa (strain NIES-843 / IAM M-2473).